The primary structure comprises 125 residues: Small ribosomal subunit protein bS6 (125 aa).

It belongs to the bacterial ribosomal protein bS6 family.

Binds together with bS18 to 16S ribosomal RNA. The sequence is that of Small ribosomal subunit protein bS6 (rpsF) from Campylobacter jejuni subsp. jejuni serotype O:2 (strain ATCC 700819 / NCTC 11168).